The chain runs to 37 residues: Photosystem II reaction center protein K (37 aa).

At Lys1–Val15 the chain is on the lumenal side. A helical membrane pass occupies residues Leu16–Val30. The Cytoplasmic portion of the chain corresponds to Gln31–Arg37.

This sequence belongs to the PsbK family. In terms of assembly, PSII is composed of 1 copy each of membrane proteins PsbA, PsbB, PsbC, PsbD, PsbE, PsbF, PsbH, PsbI, PsbJ, PsbK, PsbL, PsbM, PsbT, PsbX, PsbY, PsbZ, Psb30/Ycf12, peripheral proteins PsbO, CyanoQ (PsbQ), PsbU, PsbV and a large number of cofactors. It forms dimeric complexes. The cofactor is PSII binds multiple chlorophylls, carotenoids and specific lipids..

Its subcellular location is the cellular thylakoid membrane. Its function is as follows. One of the components of the core complex of photosystem II (PSII). PSII is a light-driven water:plastoquinone oxidoreductase that uses light energy to abstract electrons from H(2)O, generating O(2) and a proton gradient subsequently used for ATP formation. It consists of a core antenna complex that captures photons, and an electron transfer chain that converts photonic excitation into a charge separation. This is Photosystem II reaction center protein K from Thermostichus vulcanus (Synechococcus vulcanus).